The primary structure comprises 830 residues: Lon protease (830 aa).

The Lon N-terminal domain maps to 20-215 (LPAVAIRDVV…LLIKILANEV (196 aa)). Position 367–374 (367–374 (GPPGVGKT)) interacts with ATP. Residues 602-781 (ENGVGISTGL…DEIVKIAFEK (180 aa)) form the Lon proteolytic domain. Catalysis depends on residues Ser687 and Lys730. The disordered stretch occupies residues 784 to 830 (PKSSFKKSKTAPKKESAKKAAKSKKPAVKKPAVKKTKQVKKTAKKKK). The span at 802–830 (KAAKSKKPAVKKPAVKKTKQVKKTAKKKK) shows a compositional bias: basic residues.

It belongs to the peptidase S16 family. Homohexamer. Organized in a ring with a central cavity.

The protein resides in the cytoplasm. It carries out the reaction Hydrolysis of proteins in presence of ATP.. Its function is as follows. ATP-dependent serine protease that mediates the selective degradation of mutant and abnormal proteins as well as certain short-lived regulatory proteins. Required for cellular homeostasis and for survival from DNA damage and developmental changes induced by stress. Degrades polypeptides processively to yield small peptide fragments that are 5 to 10 amino acids long. Binds to DNA in a double-stranded, site-specific manner. The protein is Lon protease of Elusimicrobium minutum (strain Pei191).